The chain runs to 353 residues: Biotin synthase (353 aa).

Positions 1 to 22 (MTACSTTPTTSATSAQPAAGSP) are enriched in low complexity. Positions 1 to 30 (MTACSTTPTTSATSAQPAAGSPLQWHARPS) are disordered. The Radical SAM core domain occupies 72–299 (GDIELATLLS…TARVRLSAGR (228 aa)). [4Fe-4S] cluster-binding residues include C87, C91, and C94. 4 residues coordinate [2Fe-2S] cluster: C131, C162, C222, and R294.

It belongs to the radical SAM superfamily. Biotin synthase family. As to quaternary structure, homodimer. It depends on [4Fe-4S] cluster as a cofactor. The cofactor is [2Fe-2S] cluster.

The enzyme catalyses (4R,5S)-dethiobiotin + (sulfur carrier)-SH + 2 reduced [2Fe-2S]-[ferredoxin] + 2 S-adenosyl-L-methionine = (sulfur carrier)-H + biotin + 2 5'-deoxyadenosine + 2 L-methionine + 2 oxidized [2Fe-2S]-[ferredoxin]. The protein operates within cofactor biosynthesis; biotin biosynthesis; biotin from 7,8-diaminononanoate: step 2/2. Catalyzes the conversion of dethiobiotin (DTB) to biotin by the insertion of a sulfur atom into dethiobiotin via a radical-based mechanism. The polypeptide is Biotin synthase (Delftia acidovorans (strain DSM 14801 / SPH-1)).